Consider the following 514-residue polypeptide: Uronyl 2-sulfotransferase homolog pip (514 aa).

The Cytoplasmic portion of the chain corresponds to 1–30 (MSLNAERSYKMKLRDVENAFKYRRIPYPKR). A helical; Signal-anchor for type II membrane protein membrane pass occupies residues 31–50 (SVELIALLAISCTFFLFMHT). At 51-514 (NKLNSRLKEM…EQQNEYNEDY (464 aa)) the chain is on the lumenal side. The span at 112-121 (HDRRSSEEQL) shows a compositional bias: basic and acidic residues. The disordered stretch occupies residues 112–185 (HDRRSSEEQL…DEDEVEENDD (74 aa)). Residues 127–140 (HGHHHDHHSHHHHM) show a composition bias toward basic residues. Basic and acidic residues predominate over residues 155–170 (HDKQLAVPDNKHKEDE). The span at 171–185 (VHYEDDEDEVEENDD) shows a compositional bias: acidic residues. Asn-207 carries N-linked (GlcNAc...) asparagine glycosylation. The active site involves His-282. Residues Asn-287, Asn-416, Asn-451, and Asn-467 are each glycosylated (N-linked (GlcNAc...) asparagine).

The protein belongs to the sulfotransferase 3 family. In terms of assembly, interacts with wbl/windbeutel; the interaction is direct and does not require pip to be folded. In terms of tissue distribution, ovary-specific. Specifically expressed in the ventral follicle cells of stage 9-10 egg chambers. As to expression, expressed in ovaries. Specifically expressed in the ventral follicle cells of stage 9-10 egg chambers.

It localises to the golgi apparatus membrane. In terms of biological role, sulfotransferase involved in dorsoventral axis patterning in early embryos. Required for the ventral activation of ea/easter by the protease snk in the perivitelline space between the embryonic membrane and the eggshell; activation of ea requires both activation of the ndl-gd-snk protease cascade and sulfation of a vitelline membrane component by pip. Probably acts by mediating the sulfation of some glycoprotein or glycosaminoglycan stably deposited in the vitelline membrane, whose ventrally localized modification leads to spatially restricted activation of the protease cascade resulting in localized activation of the spz Toll receptor ligand by ea. Its function is as follows. Probably required redundantly with isoform H for dorsoventral axis patterning in embryos. Lacks 2-O-sulfotransferase activity towards completely desulfated N-sulfated (CDSNS) heparin, chondroitin, and chondroitin sulfate A, B (dermatan sulfate), and C. Sulfates several components of the eggshell vitelline membrane, including Vml, Vm26Aa, Vm32E and psd/palisade/Fcp26Aa. Probably required redundantly with isoform A for dorsoventral axis patterning in embryos. Functionally, lacks 2-O-sulfotransferase activity towards CDSNS heparin, chondroitin, and chondroitin sulfate A, B (dermatan sulfate), and C. This Drosophila melanogaster (Fruit fly) protein is Uronyl 2-sulfotransferase homolog pip.